The primary structure comprises 634 residues: Phototropic-responsive NPH3 family protein NPY2 (634 aa).

Residues 29 to 97 (SDISVDVEGS…CYGMTVTLSA (69 aa)) enclose the BTB domain. The 282-residue stretch at 207–488 (DWWVEDLCEL…VQVLFFEQVR (282 aa)) folds into the NPH3 domain. Tyrosine 429 carries the post-translational modification Phosphotyrosine. Disordered regions lie at residues 492–517 (SSGS…YGSS) and 584–634 (QLQS…VSVS). Over residues 588–602 (KGGGEKNNGGGGGGS) the composition is skewed to gly residues. Positions 619–634 (KTATPSRNLTRRVSVS) are enriched in polar residues.

It belongs to the NPH3 family. Specifically expressed in the hypophysis and the root meristems in the embryos. Highly expressed in primary root tips and radicles.

Its subcellular location is the cell membrane. The protein localises to the cytoplasm. It localises to the cytosol. Its pathway is protein modification; protein ubiquitination. In terms of biological role, may act as a substrate-specific adapter of an E3 ubiquitin-protein ligase complex (CUL3-RBX1-BTB) which mediates the ubiquitination and subsequent proteasomal degradation of target proteins. Plays an essential role in auxin-mediated organogenesis and in root gravitropic responses through the control of PIN proteins (e.g. PIN1 and PIN2) polarity in the root tip endodermal cell layer and in shoot epidermis. Recruited to the plasma membrane by PINs (e.g. PIN1 and PIN2) and, in concert with AGC kinases-mediated (e.g. D6PK and PID) PINs phosphorylation, maintains their polarity through limiting lateral diffusion-based escape. This Arabidopsis thaliana (Mouse-ear cress) protein is Phototropic-responsive NPH3 family protein NPY2.